The chain runs to 325 residues: Glutarate 2-hydroxylase (325 aa).

Residues His-160, Asp-162, and His-292 each contribute to the Fe cation site.

It belongs to the glutarate hydroxylase family. As to quaternary structure, homotetramer. The cofactor is Fe(2+).

It catalyses the reaction glutarate + 2-oxoglutarate + O2 = (S)-2-hydroxyglutarate + succinate + CO2. It participates in amino-acid degradation. In terms of biological role, acts as an alpha-ketoglutarate-dependent dioxygenase catalyzing hydroxylation of glutarate (GA) to L-2-hydroxyglutarate (L2HG). Functions in a L-lysine degradation pathway that proceeds via cadaverine, glutarate and L-2-hydroxyglutarate. This is Glutarate 2-hydroxylase from Escherichia coli O6:K15:H31 (strain 536 / UPEC).